Consider the following 340-residue polypeptide: MGGMSGLRRVYLARPRGFCAGVVMAIEAVERWAEALKEKGELVVYHEIVHNRVVVERLQAKGVHFVEDLAEVERLRRERRLADTVVFSAHGHPPAVRRQAAEMGLTVLDATCPLVTKVHTEAKRYAKEGYWILLIGDSADHQEIKGTYGEAPERTILVAVHTHVGKDPRLADPRTVEVPDPERVVVLTQTTLSVDDTLATIAILKKRFPKLVVPSRKDLCYATQNRQEAVKRIAPKVEAFLVLTSPHSSNGMRLLELAQSLVGRAYRLERPEELRPEWLEGVESLGITSAASTPEDLVQGVVARLKAQNPGLEVVEEGAWETIAFREPKPLSPEEVLKGA.

Cysteine 19 serves as a coordination point for [4Fe-4S] cluster. 2 residues coordinate (2E)-4-hydroxy-3-methylbut-2-enyl diphosphate: histidine 50 and histidine 90. Dimethylallyl diphosphate is bound by residues histidine 50 and histidine 90. Histidine 50 and histidine 90 together coordinate isopentenyl diphosphate. Position 112 (cysteine 112) interacts with [4Fe-4S] cluster. Histidine 141 is a binding site for (2E)-4-hydroxy-3-methylbut-2-enyl diphosphate. Dimethylallyl diphosphate is bound at residue histidine 141. Histidine 141 provides a ligand contact to isopentenyl diphosphate. Glutamate 143 (proton donor) is an active-site residue. Threonine 190 lines the (2E)-4-hydroxy-3-methylbut-2-enyl diphosphate pocket. Residue cysteine 220 participates in [4Fe-4S] cluster binding. Residues serine 248, serine 249, asparagine 250, and serine 292 each contribute to the (2E)-4-hydroxy-3-methylbut-2-enyl diphosphate site. Dimethylallyl diphosphate-binding residues include serine 248, serine 249, asparagine 250, and serine 292. Positions 248, 249, 250, and 292 each coordinate isopentenyl diphosphate.

The protein belongs to the IspH family. It depends on [4Fe-4S] cluster as a cofactor.

The enzyme catalyses isopentenyl diphosphate + 2 oxidized [2Fe-2S]-[ferredoxin] + H2O = (2E)-4-hydroxy-3-methylbut-2-enyl diphosphate + 2 reduced [2Fe-2S]-[ferredoxin] + 2 H(+). It catalyses the reaction dimethylallyl diphosphate + 2 oxidized [2Fe-2S]-[ferredoxin] + H2O = (2E)-4-hydroxy-3-methylbut-2-enyl diphosphate + 2 reduced [2Fe-2S]-[ferredoxin] + 2 H(+). It participates in isoprenoid biosynthesis; dimethylallyl diphosphate biosynthesis; dimethylallyl diphosphate from (2E)-4-hydroxy-3-methylbutenyl diphosphate: step 1/1. The protein operates within isoprenoid biosynthesis; isopentenyl diphosphate biosynthesis via DXP pathway; isopentenyl diphosphate from 1-deoxy-D-xylulose 5-phosphate: step 6/6. Its function is as follows. Catalyzes the conversion of 1-hydroxy-2-methyl-2-(E)-butenyl 4-diphosphate (HMBPP) into a mixture of isopentenyl diphosphate (IPP) and dimethylallyl diphosphate (DMAPP). Acts in the terminal step of the DOXP/MEP pathway for isoprenoid precursor biosynthesis. The protein is 4-hydroxy-3-methylbut-2-enyl diphosphate reductase of Thermus thermophilus (strain ATCC BAA-163 / DSM 7039 / HB27).